The sequence spans 273 residues: Large ribosomal subunit protein uL2 (273 aa).

A disordered region spans residues 228–273 (VDHPHGGGEGKTSGGRHPVTPWGFPTKGKKTRKNKRTSKFIVKKRK). Residues 254–273 (KGKKTRKNKRTSKFIVKKRK) are compositionally biased toward basic residues.

It belongs to the universal ribosomal protein uL2 family. In terms of assembly, part of the 50S ribosomal subunit. Forms a bridge to the 30S subunit in the 70S ribosome.

Functionally, one of the primary rRNA binding proteins. Required for association of the 30S and 50S subunits to form the 70S ribosome, for tRNA binding and peptide bond formation. It has been suggested to have peptidyltransferase activity; this is somewhat controversial. Makes several contacts with the 16S rRNA in the 70S ribosome. This Rickettsia peacockii (strain Rustic) protein is Large ribosomal subunit protein uL2.